The following is an 852-amino-acid chain: Envelope glycoprotein gp160 (852 aa).

An N-terminal signal peptide occupies residues 1 to 24; it reads MAHVNNYLLVTLLLISIYGYMGKN. Topologically, residues 25–677 are extracellular; sequence FVTVFYGIPA…FTSWMAYIRL (653 aa). An N-linked (GlcNAc...) asparagine; by host glycan is attached at Asn37. A disulfide bridge links Cys44 with Cys57. N-linked (GlcNAc...) asparagine; by host glycans are attached at residues Asn70, Asn114, Asn148, Asn195, Asn205, Asn237, Asn247, Asn270, Asn276, Asn287, and Asn298. 4 cysteine pairs are disulfide-bonded: Cys101–Cys213, Cys108–Cys204, Cys113–Cys162, and Cys236–Cys248. The V1 stretch occupies residues 113-161; sequence CNKTWSSASKETTTSSASLRSSTQTLLNEDSKCIQNDSCAGIGLEEMID. Residues 162–204 are V2; it reads CQFKMTGLKRDESKQYKDTWYKQDLVCEKGTRSNESKCYIKTC. A V3 region spans residues 303–335; sequence CKRPGNKMVVPIRTVSGILFHSQPINKRPKQAW. Cysteines 303 and 336 form a disulfide. N-linked (GlcNAc...) asparagine; by host glycans are attached at residues Asn341, Asn364, Asn396, Asn406, Asn445, Asn461, and Asn464. 2 disulfide bridges follow: Cys388–Cys444 and Cys395–Cys417. Residues 395 to 417 form a V4 region; sequence CNMTFFLNWVENRTGLKRNYASC. Positions 461 to 467 are V5; the sequence is NLTNITV. A fusion peptide region spans residues 510-530; it reads GVLVLGFLGFLATAGSAMGAA. Positions 573–589 are immunosuppression; the sequence is LQARVTAIEKYLKDQAQ. Asn609, Asn618, and Asn634 each carry an N-linked (GlcNAc...) asparagine; by host glycan. A coiled-coil region spans residues 622–648; that stretch reads QQWERQVRFLDANITKLLEEAQIQQEK. The MPER; binding to GalCer stretch occupies residues 655–676; that stretch reads KLNQWDIFSNWFDFTSWMAYIR. Residues 678–698 traverse the membrane as a helical segment; the sequence is GLYIVIGIVVLRIAIYIIQML. The Cytoplasmic segment spans residues 699 to 852; the sequence is ARLRKGYRPV…IRQGAELALL (154 aa). The short motif at 705–708 is the YXXV motif; contains endocytosis signal element; it reads YRPV. Residues 713 to 740 form a disordered region; that stretch reads PSYTQQIPIRKDRGQPANEETEEGGGNN. The S-palmitoyl cysteine; by host moiety is linked to residue Cys771. Residues 851–852 carry the Di-leucine internalization motif motif; the sequence is LL.

In terms of assembly, the mature envelope protein (Env) consists of a homotrimer of non-covalently associated gp120-gp41 heterodimers. The resulting complex protrudes from the virus surface as a spike. There seems to be as few as 10 spikes on the average virion. Interacts with human CD4, CCR5 and CXCR4, to form a P4HB/PDI-CD4-CXCR4-gp120 complex. Gp120 also interacts with the C-type lectins CD209/DC-SIGN and CLEC4M/DC-SIGNR (collectively referred to as DC-SIGN(R)). Gp120 and gp41 interact with GalCer. The mature envelope protein (Env) consists of a homotrimer of non-covalently associated gp120-gp41 heterodimers. The resulting complex protrudes from the virus surface as a spike. There seems to be as few as 10 spikes on the average virion. Specific enzymatic cleavages in vivo yield mature proteins. Envelope glycoproteins are synthesized as an inactive precursor that is heavily N-glycosylated and processed likely by host cell furin in the Golgi to yield the mature SU and TM proteins. The cleavage site between SU and TM requires the minimal sequence [KR]-X-[KR]-R. In terms of processing, palmitoylation of the transmembrane protein and of Env polyprotein (prior to its proteolytic cleavage) is essential for their association with host cell membrane lipid rafts. Palmitoylation is therefore required for envelope trafficking to classical lipid rafts, but not for viral replication.

It localises to the virion membrane. The protein resides in the host cell membrane. It is found in the host endosome membrane. In terms of biological role, the surface protein gp120 (SU) attaches the virus to the host lymphoid cell by binding to the primary receptor CD4. This interaction induces a structural rearrangement creating a high affinity binding site for a chemokine coreceptor like CXCR4 and/or CCR5. This peculiar 2 stage receptor-interaction strategy allows gp120 to maintain the highly conserved coreceptor-binding site in a cryptic conformation, protected from neutralizing antibodies. Since CD4 also displays a binding site for the disulfide-isomerase P4HB/PDI, a P4HB/PDI-CD4-CXCR4-gp120 complex may form. In that complex, P4HB/PDI could reach and reduce gp120 disulfide bonds, causing major conformational changes in gp120. TXN, another PDI family member could also be involved in disulfide rearrangements in Env during fusion. These changes are transmitted to the transmembrane protein gp41 and are thought to activate its fusogenic potential by unmasking its fusion peptide. Functionally, the surface protein gp120 is a ligand for CD209/DC-SIGN and CLEC4M/DC-SIGNR, which are respectively found on dendritic cells (DCs), and on endothelial cells of liver sinusoids and lymph node sinuses. These interactions allow capture of viral particles at mucosal surfaces by these cells and subsequent transmission to permissive cells. DCs are professional antigen presenting cells, critical for host immunity by inducing specific immune responses against a broad variety of pathogens. They act as sentinels in various tissues where they take up antigen, process it, and present it to T-cells following migration to lymphoid organs. HIV subverts the migration properties of dendritic cells to gain access to CD4+ T-cells in lymph nodes. Virus transmission to permissive T-cells occurs either in trans (without DCs infection, through viral capture and transmission), or in cis (following DCs productive infection, through the usual CD4-gp120 interaction), thereby inducing a robust infection. In trans infection, bound virions remain infectious over days and it is proposed that they are not degraded, but protected in non-lysosomal acidic organelles within the DCs close to the cell membrane thus contributing to the viral infectious potential during DCs' migration from the periphery to the lymphoid tissues. On arrival at lymphoid tissues, intact virions recycle back to DCs' cell surface allowing virus transmission to CD4+ T-cells. Virion capture also seems to lead to MHC-II-restricted viral antigen presentation, and probably to the activation of HIV-specific CD4+ cells. The transmembrane protein gp41 (TM) acts as a class I viral fusion protein. Under the current model, the protein has at least 3 conformational states: pre-fusion native state, pre-hairpin intermediate state, and post-fusion hairpin state. During fusion of viral and target intracellular membranes, the coiled coil regions (heptad repeats) assume a trimer-of-hairpins structure, positioning the fusion peptide in close proximity to the C-terminal region of the ectodomain. The formation of this structure appears to drive apposition and subsequent fusion of viral and target cell membranes. Complete fusion occurs in host cell endosomes and is dynamin-dependent, however some lipid transfer might occur at the plasma membrane. The virus undergoes clathrin-dependent internalization long before endosomal fusion, thus minimizing the surface exposure of conserved viral epitopes during fusion and reducing the efficacy of inhibitors targeting these epitopes. Membranes fusion leads to delivery of the nucleocapsid into the cytoplasm. Its function is as follows. The envelope glycoprotein gp160 precursor down-modulates cell surface CD4 antigen by interacting with it in the endoplasmic reticulum and blocking its transport to the cell surface. In terms of biological role, the gp120-gp41 heterodimer seems to contribute to T-cell depletion during HIV-1 infection. The envelope glycoproteins expressed on the surface of infected cells induce apoptosis through an interaction with uninfected cells expressing the receptor (CD4) and the coreceptors CXCR4 or CCR5. This type of bystander killing may be obtained by at least three distinct mechanisms. First, the interaction between the 2 cells can induce cellular fusion followed by nuclear fusion within the syncytium. Syncytia are condemned to die from apoptosis. Second, the 2 interacting cells may not fuse entirely and simply exchange plasma membrane lipids, after a sort of hemifusion process, followed by rapid death. Third, it is possible that virus-infected cells, on the point of undergoing apoptosis, fuse with CD4-expressing cells, in which case apoptosis is rapidly transmitted from one cell to the other and thus occurs in a sort of contagious fashion. Functionally, the gp120-gp41 heterodimer allows rapid transcytosis of the virus through CD4 negative cells such as simple epithelial monolayers of the intestinal, rectal and endocervical epithelial barriers. Both gp120 and gp41 specifically recognize glycosphingolipids galactosyl-ceramide (GalCer) or 3' sulfo-galactosyl-ceramide (GalS) present in the lipid rafts structures of epithelial cells. Binding to these alternative receptors allows the rapid transcytosis of the virus through the epithelial cells. This transcytotic vesicle-mediated transport of virions from the apical side to the basolateral side of the epithelial cells does not involve infection of the cells themselves. The sequence is that of Envelope glycoprotein gp160 (env) from Human immunodeficiency virus type 2 subtype B (isolate EHO) (HIV-2).